Reading from the N-terminus, the 324-residue chain is Glyoxylate/hydroxypyruvate reductase B (324 aa).

Residues Arg237 and Glu266 contribute to the active site. The Proton donor role is filled by His285.

This sequence belongs to the D-isomer specific 2-hydroxyacid dehydrogenase family. GhrB subfamily. Homodimer.

The protein localises to the cytoplasm. It carries out the reaction glycolate + NADP(+) = glyoxylate + NADPH + H(+). The catalysed reaction is (R)-glycerate + NAD(+) = 3-hydroxypyruvate + NADH + H(+). The enzyme catalyses (R)-glycerate + NADP(+) = 3-hydroxypyruvate + NADPH + H(+). Its function is as follows. Catalyzes the NADPH-dependent reduction of glyoxylate and hydroxypyruvate into glycolate and glycerate, respectively. The protein is Glyoxylate/hydroxypyruvate reductase B of Citrobacter koseri (strain ATCC BAA-895 / CDC 4225-83 / SGSC4696).